Consider the following 103-residue polypeptide: Large ribosomal subunit protein bL21 (103 aa).

The protein belongs to the bacterial ribosomal protein bL21 family. Part of the 50S ribosomal subunit. Contacts protein L20.

This protein binds to 23S rRNA in the presence of protein L20. The polypeptide is Large ribosomal subunit protein bL21 (Psychrobacter arcticus (strain DSM 17307 / VKM B-2377 / 273-4)).